The primary structure comprises 305 residues: Ribosomal RNA small subunit methyltransferase H (305 aa).

S-adenosyl-L-methionine is bound by residues 30-32, Asp-49, Phe-74, Asp-96, and Gln-103; that span reads GGH.

Belongs to the methyltransferase superfamily. RsmH family.

It localises to the cytoplasm. The catalysed reaction is cytidine(1402) in 16S rRNA + S-adenosyl-L-methionine = N(4)-methylcytidine(1402) in 16S rRNA + S-adenosyl-L-homocysteine + H(+). Specifically methylates the N4 position of cytidine in position 1402 (C1402) of 16S rRNA. In Francisella tularensis subsp. holarctica (strain LVS), this protein is Ribosomal RNA small subunit methyltransferase H.